The primary structure comprises 131 residues: RutC family protein YjgH (131 aa).

This sequence belongs to the RutC family.

In Escherichia coli (strain K12), this protein is RutC family protein YjgH (yjgH).